A 771-amino-acid chain; its full sequence is Solute carrier family 7 member 14 (771 aa).

6 helical membrane passes run 58 to 78 (LISLGVGSCVGTGMYVVSGLV), 83 to 103 (AGPGVIVSFIIAAVASILSGV), 130 to 150 (FVAFFIGWNLILEYLIGTAAG), 187 to 207 (YPDLLALVIAIIVTIIVALGV), 216 to 236 (VLNVLNLAVWVFIMIAGFFFI), and 251 to 271 (WSGVLQGAATCFYAFIGFDII). An N-linked (GlcNAc...) asparagine glycan is attached at Asn-282. Helical transmembrane passes span 291-311 (ASLVICLTAYVSVSMILTLMV), 336-356 (FVVAIGSVAGLTVSLLGSLFP), 360-380 (VIYAMAGDGLLFRFLAHVSSY), 384-404 (PVVACIVSGFLAALLSLLVSL), and 407-427 (LIEMMSIGTLLAYTLVSVCVL). Phosphoserine is present on residues Ser-465, Ser-468, and Ser-488. Helical transmembrane passes span 565–585 (VTICVLLLFILMFVFCSFIIF), 596–616 (WAILLVVLMVLLISALVFVIL), 628–648 (MAPCLPFVPAFAMLVNIYLML), and 655–675 (WIRFAVWCFVGMLIYFGYGIW). An N-linked (GlcNAc...) asparagine glycan is attached at Asn-676. The segment at 712-771 (TEGESQENWGGPAEDKGFYYQQMSDTQPNTRTSSKAKSKSKHKQNSEALIANDELDYSPE) is disordered. Over residues 732–743 (QQMSDTQPNTRT) the composition is skewed to polar residues. The span at 745–754 (SKAKSKSKHK) shows a compositional bias: basic residues. Phosphoserine is present on residues Ser-757 and Ser-769.

It belongs to the amino acid-polyamine-organocation (APC) superfamily. Cationic amino acid transporter (CAT) (TC 2.A.3.3) family.

It is found in the lysosome membrane. It catalyses the reaction 4-aminobutanoate(in) = 4-aminobutanoate(out). Imports 4-aminobutanoate (GABA) into lysosomes. May act as a GABA sensor that regulates mTORC2-dependent INS signaling and gluconeogenesis. The transport mechanism and substrate selectivity remain to be elucidated. The protein is Solute carrier family 7 member 14 of Bos taurus (Bovine).